Reading from the N-terminus, the 798-residue chain is Protocadherin beta-13 (798 aa).

A signal peptide spans 1–28 (MEASGKLICRQRQVLFSFLLLGLSLAGA). Residues 29–690 (AEPRSYSVVE…AQADLLTVYL (662 aa)) lie on the Extracellular side of the membrane. Cadherin domains follow at residues 36-134 (VVEE…SPVF), 139-243 (MLVK…APEF), 248-348 (YRVQ…APEV), 353-451 (FTSP…APAF), and 456-561 (YTLF…SPFV). Residues Asn418 and Asn436 are each glycosylated (N-linked (GlcNAc...) asparagine). Asn567 is a glycosylation site (N-linked (GlcNAc...) asparagine). The region spanning 568 to 671 (GSAPCTELVP…LVDGFSQPYL (104 aa)) is the Cadherin 6 domain. A helical membrane pass occupies residues 691–711 (VVALASVSSLFLFSVLLFVAV). Residues 712–798 (RLCRRSRAAS…FPNNFGFNIQ (87 aa)) lie on the Cytoplasmic side of the membrane.

It is found in the cell membrane. Its function is as follows. Potential calcium-dependent cell-adhesion protein. May be involved in the establishment and maintenance of specific neuronal connections in the brain. This Homo sapiens (Human) protein is Protocadherin beta-13 (PCDHB13).